A 427-amino-acid polypeptide reads, in one-letter code: UDP-N-acetylglucosamine 1-carboxyvinyltransferase (427 aa).

22-23 provides a ligand contact to phosphoenolpyruvate; it reads KN. Residue Arg99 coordinates UDP-N-acetyl-alpha-D-glucosamine. Residue Cys123 is the Proton donor of the active site. At Cys123 the chain carries 2-(S-cysteinyl)pyruvic acid O-phosphothioketal. UDP-N-acetyl-alpha-D-glucosamine is bound by residues 128-132, Asp313, and Ile335; that span reads RPIDL.

Belongs to the EPSP synthase family. MurA subfamily.

It localises to the cytoplasm. It carries out the reaction phosphoenolpyruvate + UDP-N-acetyl-alpha-D-glucosamine = UDP-N-acetyl-3-O-(1-carboxyvinyl)-alpha-D-glucosamine + phosphate. The protein operates within cell wall biogenesis; peptidoglycan biosynthesis. In terms of biological role, cell wall formation. Adds enolpyruvyl to UDP-N-acetylglucosamine. The polypeptide is UDP-N-acetylglucosamine 1-carboxyvinyltransferase (Sphingopyxis alaskensis (strain DSM 13593 / LMG 18877 / RB2256) (Sphingomonas alaskensis)).